The primary structure comprises 168 residues: MIKSMILVALILAFASAKTCKYDSSGFQSYWRFANNSIMLQFMNTDIKNNQWTGIGFGDDKNNLVGVFFMVSNNQVTVRTGSTTEHGPPNFNQNGTNMGSSVSTQSALYFPEDETMSAVVQIPVQFQGRNLQSCQKWRWIKSGKIENGQLTRNSKSPKDKKVCPMECN.

A signal peptide spans 1 to 17; it reads MIKSMILVALILAFASA. Residues 25–143 enclose the DOMON domain; the sequence is SGFQSYWRFA…CQKWRWIKSG (119 aa). Residues Asn-35 and Asn-94 are each glycosylated (N-linked (GlcNAc...) asparagine). The tract at residues 148-168 is disordered; that stretch reads GQLTRNSKSPKDKKVCPMECN. The span at 156-168 shows a compositional bias: basic and acidic residues; the sequence is SPKDKKVCPMECN.

Its subcellular location is the secreted. In Caenorhabditis briggsae, this protein is DOMON domain-containing protein CBG21753.